We begin with the raw amino-acid sequence, 444 residues long: MARKYFGTDGIRGTVGQAPITPDFVLRLAHAVGRVLRRTEERPTVLIGKDTRISGYMLESALESGFNSAGVDVVLLGPLPTPGVAYLTRAQRASLGVVISASHNAYPDNGIKFFSAQGTKLPDEWELAVEAALDEAPAWADSASLGKARRLEDAAGRYIEFCKSTFSQDLTLKGTKIVVDAAHGAAYHIAPKVFHELGAEVLAIGCSPDGLNINHQVGATHPDALVRAVRANRADYGVALDGDADRLQMVDAAGRLYNGDELLYLLAADRLSRGENVPGVVGTLMTNMAVELALKADGVELVRAKVGDRYVLEELARRRWLLGGESSGHLLALDRHTTGDGLISALQVLQACVRGGRSLARTLEHVRLFPQVLVNVRLLPGQDWKANTVLQDALKSVEAELGTQGRVLVRASGTEPLLRVMVETSDADRASHFAHQLADAARAG.

The active-site Phosphoserine intermediate is the serine 102. Positions 102, 241, 243, and 245 each coordinate Mg(2+). At serine 102 the chain carries Phosphoserine.

The protein belongs to the phosphohexose mutase family. The cofactor is Mg(2+). In terms of processing, activated by phosphorylation.

The catalysed reaction is alpha-D-glucosamine 1-phosphate = D-glucosamine 6-phosphate. Its function is as follows. Catalyzes the conversion of glucosamine-6-phosphate to glucosamine-1-phosphate. The polypeptide is Phosphoglucosamine mutase (Paracidovorax citrulli (strain AAC00-1) (Acidovorax citrulli)).